The chain runs to 435 residues: Serine/threonine-protein kinase 40 (435 aa).

Residues 1–10 (MKRRASDRGA) show a composition bias toward basic and acidic residues. A disordered region spans residues 1-25 (MKRRASDRGAGETSARAKALGSGIS). The 297-residue stretch at 35–331 (FILGPRLGNS…ADVLEALSAI (297 aa)) folds into the Protein kinase domain. ATP-binding positions include 41 to 49 (LGNSPVPSI) and K66. Residue R196 is the Proton acceptor of the active site.

Belongs to the protein kinase superfamily. CAMK Ser/Thr protein kinase family. Strongly expressed in heart, brain, placenta, lung, skeletal muscle, kidney, spleen, thymus, prostate, liver, pancreas, testis, ovary, small intestine, colon and peripheral blood leukocytes.

The protein resides in the nucleus. Its subcellular location is the cytoplasm. It catalyses the reaction L-seryl-[protein] + ATP = O-phospho-L-seryl-[protein] + ADP + H(+). The catalysed reaction is L-threonyl-[protein] + ATP = O-phospho-L-threonyl-[protein] + ADP + H(+). Functionally, may be a negative regulator of NF-kappa-B and p53-mediated gene transcription. This is Serine/threonine-protein kinase 40 (STK40) from Homo sapiens (Human).